We begin with the raw amino-acid sequence, 238 residues long: Tetraspanin-4 (238 aa).

At 1-13 the chain is on the cytoplasmic side; that stretch reads MARACLQAVKYLM. The helical transmembrane segment at 14–34 threads the bilayer; that stretch reads FAFNLLFWLGGCGVLGVGIWL. Over 35 to 55 the chain is Extracellular; the sequence is AATQGSFATLSSSFPSLSAAN. The chain crosses the membrane as a helical span at residues 56–76; sequence LLIITGAFVMAIGFVGCLGAI. At 77 to 85 the chain is on the cytoplasmic side; that stretch reads KENKCLLLT. A helical transmembrane segment spans residues 86–106; sequence FFLLLLLVFLLEATIAILFFA. The Extracellular portion of the chain corresponds to 107 to 201; that stretch reads YTDKIDRYAQ…ETVKVWLQEN (95 aa). N-linked (GlcNAc...) asparagine glycans are attached at residues asparagine 152 and asparagine 161. A helical membrane pass occupies residues 202-222; the sequence is LLAVGIFGLCTALVQILGLTF. The Cytoplasmic portion of the chain corresponds to 223–238; it reads AMTMYCQVVKADTYCA.

This sequence belongs to the tetraspanin (TM4SF) family. In terms of assembly, forms a complex with integrins.

It is found in the membrane. The polypeptide is Tetraspanin-4 (TSPAN4) (Pongo abelii (Sumatran orangutan)).